We begin with the raw amino-acid sequence, 411 residues long: Dipeptidase 1 (411 aa).

An N-terminal signal peptide occupies residues 1 to 16; that stretch reads MWSGWWLWPLVAVCTA. Residues H36 and D38 each coordinate Zn(2+). N57 is a glycosylation site (N-linked (GlcNAc...) asparagine). A disulfide bridge links C87 with C170. A Zn(2+)-binding site is contributed by E141. H168 is a binding site for substrate. Residues H214 and H235 each contribute to the Zn(2+) site. A disulfide bridge links C242 with C274. R246 is a substrate binding site. N-linked (GlcNAc...) asparagine glycosylation occurs at N279. Residue D304 coordinates substrate. Residues N332 and N358 are each glycosylated (N-linked (GlcNAc...) asparagine). S385 carries GPI-anchor amidated serine lipidation. A propeptide spans 386 to 411 (removed in mature form); sequence GASSLHRHWGLLLASLAPLVLCLSLL.

Belongs to the metallo-dependent hydrolases superfamily. Peptidase M19 family. Homodimer; disulfide-linked. Zn(2+) serves as cofactor. In terms of tissue distribution, expressed in lung and kidneys.

It localises to the apical cell membrane. It is found in the cell projection. The protein localises to the microvillus membrane. The enzyme catalyses an L-aminoacyl-L-amino acid + H2O = 2 an L-alpha-amino acid. It catalyses the reaction leukotriene D4 + H2O = leukotriene E4 + glycine. The catalysed reaction is a beta-lactam + H2O = a substituted beta-amino acid. It carries out the reaction L-cystine-bis-glycine + 2 H2O = L-cystine + 2 glycine. The enzyme catalyses glycyldehydrophenylalanine + H2O = 2,3-didehydrophenylalanine + glycine. With respect to regulation, inhibited by L-penicillamine. Beta-lactamase activity is inhibited by cilastatin. Functionally, hydrolyzes a wide range of dipeptides including the conversion of leukotriene D4 to leukotriene E4. Hydrolyzes cystinyl-bis-glycine (cys-bis-gly) formed during glutathione degradation. Also possesses beta lactamase activity and can hydrolyze the beta-lactam antibiotic imipenem. In terms of biological role, independently of its dipeptidase activity, acts as an adhesion receptor for neutrophil recruitment from bloodstream into inflamed lungs and liver. This is Dipeptidase 1 (DPEP1) from Homo sapiens (Human).